The following is a 448-amino-acid chain: Probable glycine dehydrogenase (decarboxylating) subunit 1 (448 aa).

It belongs to the GcvP family. N-terminal subunit subfamily. As to quaternary structure, the glycine cleavage system is composed of four proteins: P, T, L and H. In this organism, the P 'protein' is a heterodimer of two subunits.

The catalysed reaction is N(6)-[(R)-lipoyl]-L-lysyl-[glycine-cleavage complex H protein] + glycine + H(+) = N(6)-[(R)-S(8)-aminomethyldihydrolipoyl]-L-lysyl-[glycine-cleavage complex H protein] + CO2. In terms of biological role, the glycine cleavage system catalyzes the degradation of glycine. The P protein binds the alpha-amino group of glycine through its pyridoxal phosphate cofactor; CO(2) is released and the remaining methylamine moiety is then transferred to the lipoamide cofactor of the H protein. This chain is Probable glycine dehydrogenase (decarboxylating) subunit 1, found in Geobacillus kaustophilus (strain HTA426).